The following is a 689-amino-acid chain: DNA ligase (689 aa).

Residues 40-44, 89-90, and Glu-121 each bind NAD(+); these read DSEYD and SL. Catalysis depends on Lys-123, which acts as the N6-AMP-lysine intermediate. NAD(+) is bound by residues Arg-144, Glu-179, Lys-295, and Lys-319. Residues Cys-413, Cys-416, Cys-431, and Cys-437 each coordinate Zn(2+). The region spanning 610–689 is the BRCT domain; sequence REQSSLTDKI…EEWLTLIKNV (80 aa).

This sequence belongs to the NAD-dependent DNA ligase family. LigA subfamily. Mg(2+) is required as a cofactor. It depends on Mn(2+) as a cofactor.

The enzyme catalyses NAD(+) + (deoxyribonucleotide)n-3'-hydroxyl + 5'-phospho-(deoxyribonucleotide)m = (deoxyribonucleotide)n+m + AMP + beta-nicotinamide D-nucleotide.. In terms of biological role, DNA ligase that catalyzes the formation of phosphodiester linkages between 5'-phosphoryl and 3'-hydroxyl groups in double-stranded DNA using NAD as a coenzyme and as the energy source for the reaction. It is essential for DNA replication and repair of damaged DNA. The protein is DNA ligase of Rickettsia africae (strain ESF-5).